The following is a 445-amino-acid chain: Disintegrin and metalloproteinase domain-containing protein 18 (445 aa).

The region spanning 1-106 is the Peptidase M12B domain; sequence IYRKHLKYIG…LDMQCLGDLS (106 aa). The Extracellular portion of the chain corresponds to 1–409; that stretch reads IYRKHLKYIG…TKRLSQHADS (409 aa). 3 disulfides stabilise this stretch: Cys-18–Cys-101, Cys-60–Cys-85, and Cys-62–Cys-67. Asn-19 and Asn-59 each carry an N-linked (GlcNAc...) asparagine glycan. N-linked (GlcNAc...) asparagine glycosylation is found at Asn-84 and Asn-131. Residues 113–202 enclose the Disintegrin domain; the sequence is QSVCGNGIVE…HCVPDTFALD (90 aa). A disulfide bridge connects residues Cys-173 and Cys-194. 2 N-linked (GlcNAc...) asparagine glycosylation sites follow: Asn-333 and Asn-340. In terms of domain architecture, EGF-like spans 342-376; sequence TGNDCNAAKKCKGNGICNNFGHCQCFPDYRPPDCN. 3 disulfides stabilise this stretch: Cys-346-Cys-358, Cys-352-Cys-364, and Cys-366-Cys-375. The helical transmembrane segment at 410–430 threads the bilayer; the sequence is WVILGFFIFLPFIMTLFLGII. Residues 431–445 are Cytoplasmic-facing; the sequence is KRNERKIVPQKEQER.

The prodomain and the metalloprotease-like domain are cleaved during the epididymal maturation of the spermatozoa. As to expression, expressed specifically in testis.

Its subcellular location is the membrane. Its function is as follows. Sperm surface membrane protein that may be involved in spermatogenesis and fertilization. This is a non catalytic metalloprotease-like protein. The polypeptide is Disintegrin and metalloproteinase domain-containing protein 18 (Adam18) (Rattus norvegicus (Rat)).